The primary structure comprises 513 residues: Microtubule-associated protein 70-5 (513 aa).

Disordered regions lie at residues 1–20 (MTAA…SQLK), 60–81 (KLGA…LEEE), 347–367 (FLTS…GSVT), and 393–413 (ANGL…EDGN). Polar residues predominate over residues 9–18 (VSDTSSLQSQ). Positions 10-322 (SDTSSLQSQL…LKLRLKTIED (313 aa)) form a coiled coil. A compositionally biased stretch (basic and acidic residues) spans 60–80 (KLGATENQVDQKELERKKLEE). A required for targeting to microtubules region spans residues 190 to 400 (FLEKINRQKV…ITANGLTDQH (211 aa)). The stretch at 426–501 (DRLQKEVIAL…EESKLCRKAK (76 aa)) forms a coiled coil.

The protein belongs to the MAP70 family. As to quaternary structure, interacts with MAP70.1 and itself.

It localises to the cytoplasm. The protein localises to the cytoskeleton. Its function is as follows. Plant-specific protein that interact with microtubules and regulates microtubule dynamics. May play a role in anisotropic cell expansion and organ growth. In association with MAP70.1, is essential for the normal banding pattern of secondary cell wall and for the proper development of xylem tracheary elements and wood formation. The protein is Microtubule-associated protein 70-5 (MAP70.5) of Arabidopsis thaliana (Mouse-ear cress).